A 457-amino-acid chain; its full sequence is Protein unc-93 homolog A (457 aa).

5 consecutive transmembrane segments (helical) span residues 8 to 28, 42 to 62, 65 to 85, 86 to 106, and 140 to 160; these read VLVL…LQSL, ALST…PVLI, LGCK…SLGN, FYAS…GAAA, and IFFL…SLVF. N-linked (GlcNAc...) asparagine glycosylation is present at Asn190. A run of 6 helical transmembrane segments spans residues 202–222, 257–277, 291–311, 320–340, 344–364, and 395–415; these read TLLG…AVFL, LRLL…LSGD, FVGY…VLFG, TVLF…LLLW, PSQL…DAVW, and FVIA…YVLL. The disordered stretch occupies residues 438-457; sequence GPLAAGRTKPAEDGATQTKL.

It belongs to the unc-93 family.

It is found in the cell membrane. This Bos taurus (Bovine) protein is Protein unc-93 homolog A (UNC93A).